The sequence spans 97 residues: Integration host factor subunit beta (97 aa).

It belongs to the bacterial histone-like protein family. Heterodimer of an alpha and a beta chain.

Its function is as follows. This protein is one of the two subunits of integration host factor, a specific DNA-binding protein that functions in genetic recombination as well as in transcriptional and translational control. The protein is Integration host factor subunit beta of Buchnera aphidicola subsp. Cinara cedri (strain Cc).